The sequence spans 101 residues: Small ribosomal subunit protein uS14 (101 aa).

This sequence belongs to the universal ribosomal protein uS14 family. As to quaternary structure, part of the 30S ribosomal subunit. Contacts proteins S3 and S10.

In terms of biological role, binds 16S rRNA, required for the assembly of 30S particles and may also be responsible for determining the conformation of the 16S rRNA at the A site. The protein is Small ribosomal subunit protein uS14 of Cronobacter sakazakii (strain ATCC BAA-894) (Enterobacter sakazakii).